A 514-amino-acid chain; its full sequence is 2-isopropylmalate synthase (514 aa).

In terms of domain architecture, Pyruvate carboxyltransferase spans 5–268 (LIIFDTTLRD…DVGLDTTQIV (264 aa)). Mn(2+) contacts are provided by Asp-14, His-202, His-204, and Asn-239. The tract at residues 395–514 (KFVSLSQRSE…KDDKLNPQRS (120 aa)) is regulatory domain.

Belongs to the alpha-IPM synthase/homocitrate synthase family. LeuA type 1 subfamily. Homodimer. Requires Mn(2+) as cofactor.

Its subcellular location is the cytoplasm. The catalysed reaction is 3-methyl-2-oxobutanoate + acetyl-CoA + H2O = (2S)-2-isopropylmalate + CoA + H(+). It participates in amino-acid biosynthesis; L-leucine biosynthesis; L-leucine from 3-methyl-2-oxobutanoate: step 1/4. Catalyzes the condensation of the acetyl group of acetyl-CoA with 3-methyl-2-oxobutanoate (2-ketoisovalerate) to form 3-carboxy-3-hydroxy-4-methylpentanoate (2-isopropylmalate). This is 2-isopropylmalate synthase from Burkholderia ambifaria (strain MC40-6).